The primary structure comprises 143 residues: CRISPR-associated endoribonuclease Cas2 (143 aa).

Mg(2+) is bound at residue D14.

This sequence belongs to the CRISPR-associated endoribonuclease Cas2 protein family. In terms of assembly, homodimer, forms a heterotetramer with a Cas1 homodimer. The cofactor is Mg(2+).

Its function is as follows. CRISPR (clustered regularly interspaced short palindromic repeat), is an adaptive immune system that provides protection against mobile genetic elements (viruses, transposable elements and conjugative plasmids). CRISPR clusters contain sequences complementary to antecedent mobile elements and target invading nucleic acids. CRISPR clusters are transcribed and processed into CRISPR RNA (crRNA). Functions as a ssRNA-specific endoribonuclease. Involved in the integration of spacer DNA into the CRISPR cassette. This Campylobacter jejuni subsp. jejuni serotype O:2 (strain ATCC 700819 / NCTC 11168) protein is CRISPR-associated endoribonuclease Cas2.